The following is a 376-amino-acid chain: MNPLRVIVKEEELDFAAAAAAAAAGEGSPSSWAVGVMDLPRPMEGLGEAGPPPFLCKTYEVVDDPGTDTVISWGFAGNSFVVWDANAFAAVLLPRYFKHSNFSSFVRQLNTYGFRKVDPDRWEFANEGFLRGKKELLKTIKRRRPPPSSPPSSSSSSSSSQHQQQPAAACLEVGQFGRDGVVNRLQRDKSVLIAEVVKLRQEQQTTRAQMQAMEERISAAEQKQQQMTVFLARAMKNPGFLQMLVDRQAGQHGARNRVLEDALSKKRRRPIEYLLTRNGETCAAGESAAMLAADGVAEPDGDTTPRGDGGGGGGGDTESFWMQLLSLGLEEKQREDGVAGGVQESNSGGADVDNDEEDDDDDVDVLVQSIYHLSPK.

Positions 137–168 (LKTIKRRRPPPSSPPSSSSSSSSSQHQQQPAA) are disordered. The segment covering 151–160 (PSSSSSSSSS) has biased composition (low complexity). Positions 182 to 229 (VNRLQRDKSVLIAEVVKLRQEQQTTRAQMQAMEERISAAEQKQQQMTV) form a coiled coil. Positions 185 to 235 (LQRDKSVLIAEVVKLRQEQQTTRAQMQAMEERISAAEQKQQQMTVFLARAM) are hydrophobic repeat HR-A/B. Residues 265-269 (KKRRR) carry the Nuclear localization signal motif. Disordered stretches follow at residues 296 to 319 (VAEPDGDTTPRGDGGGGGGGDTES) and 332 to 362 (KQREDGVAGGVQESNSGGADVDNDEEDDDDD). Over residues 307–316 (GDGGGGGGGD) the composition is skewed to gly residues. Residues 318–325 (ESFWMQLL) carry the AHA motif. Residues 352–362 (VDNDEEDDDDD) show a composition bias toward acidic residues. The Nuclear export signal signature appears at 366–373 (LVQSIYHL).

It belongs to the HSF family. Class A subfamily. In terms of assembly, homotrimer. Exhibits temperature-dependent phosphorylation.

It localises to the cytoplasm. It is found in the nucleus. Functionally, transcriptional regulator that specifically binds DNA of heat shock promoter elements (HSE). This is Heat stress transcription factor A-2a (HSFA2A) from Oryza sativa subsp. japonica (Rice).